Consider the following 211-residue polypeptide: Probable cobalt-precorrin-7 C(5)-methyltransferase (211 aa).

It belongs to the precorrin methyltransferase family.

The catalysed reaction is Co-precorrin-7 + S-adenosyl-L-methionine = Co-precorrin-8X + S-adenosyl-L-homocysteine + H(+). It functions in the pathway cofactor biosynthesis; adenosylcobalamin biosynthesis; cob(II)yrinate a,c-diamide from sirohydrochlorin (anaerobic route): step 8/10. In terms of biological role, catalyzes the methylation of C-5 in cobalt-precorrin-7 to form cobalt-precorrin-8. In Methanocaldococcus jannaschii (strain ATCC 43067 / DSM 2661 / JAL-1 / JCM 10045 / NBRC 100440) (Methanococcus jannaschii), this protein is Probable cobalt-precorrin-7 C(5)-methyltransferase (cbiE).